A 140-amino-acid polypeptide reads, in one-letter code: Large-conductance mechanosensitive channel (140 aa).

2 helical membrane passes run 14 to 34 (VMDL…TGSL) and 85 to 105 (GAFV…FLLV).

The protein belongs to the MscL family. Homopentamer.

Its subcellular location is the cell inner membrane. Channel that opens in response to stretch forces in the membrane lipid bilayer. May participate in the regulation of osmotic pressure changes within the cell. The sequence is that of Large-conductance mechanosensitive channel from Sphingopyxis alaskensis (strain DSM 13593 / LMG 18877 / RB2256) (Sphingomonas alaskensis).